Reading from the N-terminus, the 572-residue chain is NADP-dependent malic enzyme (572 aa).

Position 1 is an N-acetylmethionine (Met-1). Tyr-102 acts as the Proton donor in catalysis. Arg-155 contributes to the NADP(+) binding site. Residue Lys-173 is the Proton acceptor of the active site. The a divalent metal cation site is built by Glu-245, Asp-246, and Asp-269. NADP(+)-binding positions include Asp-269 and 301–318 (GAGEAALGIAHLIVMAME). Position 336 is a phosphoserine (Ser-336). An NADP(+)-binding site is contributed by Asn-408.

This sequence belongs to the malic enzymes family. Homotetramer. Mg(2+) serves as cofactor. The cofactor is Mn(2+). In terms of tissue distribution, ubiquitous. Up-regulated by 3,5,3'-triiodo-L-thyronine in the liver, kidney and heart.

The protein localises to the cytoplasm. It carries out the reaction (S)-malate + NADP(+) = pyruvate + CO2 + NADPH. It catalyses the reaction oxaloacetate + H(+) = pyruvate + CO2. Its function is as follows. Catalyzes the oxidative decarboxylation of (S)-malate in the presence of NADP(+) and divalent metal ions, and decarboxylation of oxaloacetate. This Rattus norvegicus (Rat) protein is NADP-dependent malic enzyme (Me1).